Here is a 143-residue protein sequence, read N- to C-terminus: Nucleoside diphosphate kinase (143 aa).

The ATP site is built by K11, F59, R87, T93, R104, and N114. The Pros-phosphohistidine intermediate role is filled by H117.

This sequence belongs to the NDK family. Homotetramer. Requires Mg(2+) as cofactor.

The protein resides in the cytoplasm. It catalyses the reaction a 2'-deoxyribonucleoside 5'-diphosphate + ATP = a 2'-deoxyribonucleoside 5'-triphosphate + ADP. The catalysed reaction is a ribonucleoside 5'-diphosphate + ATP = a ribonucleoside 5'-triphosphate + ADP. In terms of biological role, major role in the synthesis of nucleoside triphosphates other than ATP. The ATP gamma phosphate is transferred to the NDP beta phosphate via a ping-pong mechanism, using a phosphorylated active-site intermediate. The sequence is that of Nucleoside diphosphate kinase from Pseudomonas aeruginosa (strain UCBPP-PA14).